The primary structure comprises 219 residues: RING finger protein nenya (219 aa).

The RING-type zinc-finger motif lies at 6–48; it reads CNKCFRRRNVEPTLIFHMTQCQHVLCASCLSESSTDKKCPLCK. A disordered region spans residues 161–181; sequence NQARGLRPRTPSVTTSDNTQS.

As to quaternary structure, may interact with itself, with narya and vilya through its RING-type zinc finger.

In terms of biological role, required for the formation of DNA double-strand breaks together with narya and vilya during the meiotic recombination process. Plays a redundant role with narya in chromosome segregation during female meiosis. This Drosophila melanogaster (Fruit fly) protein is RING finger protein nenya.